Here is a 155-residue protein sequence, read N- to C-terminus: Ribosome maturation factor RimP (155 aa).

It belongs to the RimP family.

The protein localises to the cytoplasm. In terms of biological role, required for maturation of 30S ribosomal subunits. The sequence is that of Ribosome maturation factor RimP from Prochlorococcus marinus (strain SARG / CCMP1375 / SS120).